An 852-amino-acid polypeptide reads, in one-letter code: Elongation factor 2 (852 aa).

The region spanning 17-356 (RNIRNMSVIA…MIAFHLPSPV (340 aa)) is the tr-type G domain. Residue 26–33 (AHVDHGKS) coordinates GTP. Phosphothreonine occurs at positions 57 and 59. GTP contacts are provided by residues 170 to 173 (NKMD) and 227 to 229 (SGL). At H709 the chain carries Diphthamide.

The protein belongs to the TRAFAC class translation factor GTPase superfamily. Classic translation factor GTPase family. EF-G/EF-2 subfamily. Phosphorylation by EF-2 kinase completely inactivates EF-2. Post-translationally, AMPylated by fic-1.

It localises to the cytoplasm. The enzyme catalyses GTP + H2O = GDP + phosphate + H(+). Catalyzes the GTP-dependent ribosomal translocation step during translation elongation. During this step, the ribosome changes from the pre-translocational (PRE) to the post-translocational (POST) state as the newly formed A-site-bound peptidyl-tRNA and P-site-bound deacylated tRNA move to the P and E sites, respectively. Catalyzes the coordinated movement of the two tRNA molecules, the mRNA and conformational changes in the ribosome. Involved in the morphogenesis of epidermal tissues. This chain is Elongation factor 2 (eef-2), found in Caenorhabditis elegans.